We begin with the raw amino-acid sequence, 549 residues long: MDVVEVAGSWWAQEREDIIMKYEKGHRAGLPEDKGPKPFRSYNNNVDHLGIVHETELPPLTAREAKQIRREISRKSKWVDMLGDWEKYKSSRKLIDRAYKGMPMNIRGPMWSVLLNTEEMKLKNPGRYQIMKEKGKRSSEHIQRIDRDVSGTLRKHIFFRDRYGTKQRELLHILLAYEEYNPEVGYCRDLSHIAALFLLYLPEEDAFWALVQLLASERHSLQGFHSPNGGTVQGLQDQQEHVVATSQPKTMGHQDKKDLCGQCSPLGCLIRILIDGISLGLTLRLWDVYLVEGEQALMPITRIAFKVQQKRLTKTSRCGPWARFCNRFVDTWARDEDTVLKHLRASMKKLTRKKGDLPPPAKPEQGSSASRPVPASRGGKTLCKGDRQAPPGPPARFPRPIWSASPPRAPRSSTPCPGGAVREDTYPVGTQGVPSPALAQGGPQGSWRFLQWNSMPRLPTDLDVEGPWFRHYDFRQSCWVRAISQEDQLAPCWQAEHPAERVRSAFAAPSTDSDQGTPFRARDEQQCAPTSGPCLCGLHLESSQFPPGF.

One can recognise a Rab-GAP TBC domain in the interval 101–293 (GMPMNIRGPM…RLWDVYLVEG (193 aa)). S-palmitoyl cysteine attachment occurs at residues Cys-318 and Cys-325. Residues 350–419 (LTRKKGDLPP…PRSSTPCPGG (70 aa)) form a disordered region. Positions 398 to 417 (PRPIWSASPPRAPRSSTPCP) are enriched in low complexity.

Post-translationally, ubiquitinated by a CUL7-based E3 ligase, which leads to proteasomal degradation. In terms of processing, palmitoylation is required for membrane localization and protects TBC1D3 from ubiquitination. As to expression, expressed in liver, skeletal muscle, kidney, pancreas, spleen, testis, ovary, small intestine and peripheral blood leukocytes. Overexpressed in prostate cancers.

The protein localises to the cell membrane. Its function is as follows. Acts as a GTPase activating protein for RAB5. Does not act on RAB4 or RAB11. This is TBC1 domain family member 3 (TBC1D3) from Homo sapiens (Human).